An 87-amino-acid polypeptide reads, in one-letter code: MNSKVFAALLLLALSTCVLSEKYCPTPRNTSCKKMNIRNNCCRDSDCTSNAFCCAEPCGNFCHKASDKPGGRRVDPNASCQTGYVYW.

A signal peptide spans methionine 1–serine 20. The region spanning glutamate 21–serine 66 is the WAP domain. Intrachain disulfides connect cysteine 24/cysteine 54, cysteine 32/cysteine 58, cysteine 41/cysteine 53, cysteine 42/cysteine 80, and cysteine 47/cysteine 62.

Belongs to the venom protein 11 family. 01 (wap-1) subfamily. Contains 5 disulfide bonds. In terms of tissue distribution, expressed by the venom gland.

The protein resides in the secreted. Functionally, has antibacterial activity. The sequence is that of U14-lycotoxin-Ls1a from Lycosa singoriensis (Wolf spider).